The primary structure comprises 215 residues: Peroxiredoxin-5, mitochondrial (215 aa).

A mitochondrion-targeting transit peptide spans 1–53; that stretch reads MGLAGVCVLRRSAGYILGGAAGQSVAATAAARRRSEGGWASGGVRSFSRAAAA. Residues 57-215 enclose the Thioredoxin domain; that stretch reads IKVGDAIPAV…SLAPSIISQL (159 aa). At Lys76 the chain carries N6-acetyllysine. An N6-acetyllysine; alternate modification is found at Lys84. Lys84 bears the N6-succinyllysine; alternate mark. The Cysteine sulfenic acid (-SOH) intermediate role is filled by Cys101. Cys101 carries the S-palmitoyl cysteine lipid modification. Cys101 and Cys205 are oxidised to a cystine. At Lys117 the chain carries N6-succinyllysine. Residues Ser172 and Ser183 each carry the phosphoserine modification. Positions 213-215 match the Microbody targeting signal motif; sequence SQL.

It belongs to the peroxiredoxin family. Prx5 subfamily. Monomer. In terms of processing, S-palmitoylated. Palmitoylation occurs on the active site, inhibiting its reactivity; therefore PRDX5 palmitoylation status determines its antioxidant capacity. S-palmitoylated. Depalmitoylated by ABHD10.

Its subcellular location is the mitochondrion. The protein localises to the cytoplasm. It is found in the peroxisome matrix. The enzyme catalyses a hydroperoxide + [thioredoxin]-dithiol = an alcohol + [thioredoxin]-disulfide + H2O. Thiol-specific peroxidase that catalyzes the reduction of hydrogen peroxide and organic hydroperoxides to water and alcohols, respectively. Plays a role in cell protection against oxidative stress by detoxifying peroxides and as sensor of hydrogen peroxide-mediated signaling events. This Papio hamadryas (Hamadryas baboon) protein is Peroxiredoxin-5, mitochondrial (PRDX5).